The sequence spans 171 residues: Transcription factor E (171 aa).

Residues 5-88 (YEDPFIRIAV…RWRSRREEVE (84 aa)) form the HTH TFE/IIEalpha-type domain.

The protein belongs to the TFE family. In terms of assembly, monomer. Interaction with RNA polymerase subunits RpoF and RpoE is necessary for Tfe stimulatory transcription activity. Able to interact with Tbp and RNA polymerase in the absence of DNA promoter. Interacts both with the preinitiation and elongation complexes.

Functionally, transcription factor that plays a role in the activation of archaeal genes transcribed by RNA polymerase. Facilitates transcription initiation by enhancing TATA-box recognition by TATA-box-binding protein (Tbp), and transcription factor B (Tfb) and RNA polymerase recruitment. Not absolutely required for transcription in vitro, but particularly important in cases where Tbp or Tfb function is not optimal. It dynamically alters the nucleic acid-binding properties of RNA polymerases by stabilizing the initiation complex and destabilizing elongation complexes. Seems to translocate with the RNA polymerase following initiation and acts by binding to the non template strand of the transcription bubble in elongation complexes. This chain is Transcription factor E, found in Cenarchaeum symbiosum (strain A).